A 354-amino-acid polypeptide reads, in one-letter code: AT-hook motif nuclear-localized protein 11 (354 aa).

2 disordered regions span residues 1–158 and 290–354; these read MDRR…MMPS and KREE…LMRG. 2 stretches are compositionally biased toward low complexity: residues 46–55 and 75–96; these read NSISPFGSNP and VDSS…PPSG. A Bipartite nuclear localization signal motif is present at residues 101 to 109; the sequence is KRKRGRPRK. A DNA-binding region (a.T hook 1) is located at residues 101 to 113; that stretch reads KRKRGRPRKYGQD. Positions 122-133 are enriched in low complexity; the sequence is SPSISNVSPNSN. The segment at residues 134–146 is a DNA-binding region (a.T hook 2); that stretch reads KRGRGRPPGSGKK. Positions 159 to 302 constitute a PPC domain; that stretch reads STGMSFTPHV…ETSEDVQDTD (144 aa). Residues 294-303 are compositionally biased toward acidic residues; sequence TSEDVQDTDA. The segment covering 304–327 has biased composition (polar residues); the sequence is LENNNDNTAATSPPVPQQSQNIVQ. Positions 340 to 354 are enriched in basic and acidic residues; sequence MDMHHPHMDIDLMRG.

The protein localises to the nucleus. In terms of biological role, transcription factor that specifically binds AT-rich DNA sequences related to the nuclear matrix attachment regions (MARs). The chain is AT-hook motif nuclear-localized protein 11 from Arabidopsis thaliana (Mouse-ear cress).